The primary structure comprises 204 residues: Somatotropin (204 aa).

The signal sequence occupies residues 1-17; the sequence is MDRAILLLSVVCLVVSS. Glutamine 18 is modified (pyrrolidone carboxylic acid). Histidine 36 is a Zn(2+) binding site. Residues cysteine 69 and cysteine 177 are joined by a disulfide bond. Glutamate 186 contacts Zn(2+). Cysteine 194 and cysteine 202 are oxidised to a cystine.

This sequence belongs to the somatotropin/prolactin family.

It is found in the secreted. Its function is as follows. Growth hormone plays an important role in growth control and is involved in the regulation of several anabolic processes. Implicated as an osmoregulatory substance important for seawater adaptation. This is Somatotropin (gh) from Odontesthes argentinensis (Marine silverside).